A 362-amino-acid polypeptide reads, in one-letter code: MTDMPTLDAIRQAPKALLHDHLDGGLRPETVLDIAGQVGYDGLPSTDAGELASWFRTQSHSGSLERYLEPFSHTVAVMQTPEALYRVAYECVEDLAADAVVYAEIRFAPELHINQGLTFDEIVDAVLAGFAAGERACAGAGCPIKVRLLVTAMRHAAMSREIAELAIRFRDKGVVGFDIAGAEAGYPPSRHLDAFEYMRDNNARFTIHAGEAFGLPSIHEAIAFCGADRLGHGVRIVDDIEVGPDGDVKLGRLAAILRDKRIPLELCPSSNVQTGAVASIAEHPFDLLARSRFRVTVNTDNRLMSDTSMSQEMYRLVETFGYGWSDIQRFTINAMKSAFIAFDERLEIIDEVIKPRFAVLIG.

Positions 19 and 21 each coordinate Zn(2+). Residues His21, Asp23, and Gly181 each contribute to the substrate site. Zn(2+) is bound at residue His208. Residue Glu211 is the Proton donor of the active site. Residue Asp300 participates in Zn(2+) binding.

It belongs to the metallo-dependent hydrolases superfamily. Adenosine and AMP deaminases family. Adenosine deaminase subfamily. Zn(2+) is required as a cofactor.

It catalyses the reaction adenosine + H2O + H(+) = inosine + NH4(+). The catalysed reaction is 2'-deoxyadenosine + H2O + H(+) = 2'-deoxyinosine + NH4(+). In terms of biological role, catalyzes the hydrolytic deamination of adenosine and 2-deoxyadenosine. The chain is Adenosine deaminase from Mycobacterium marinum (strain ATCC BAA-535 / M).